Here is a 246-residue protein sequence, read N- to C-terminus: Agamous-like MADS-box protein AGL5 (246 aa).

Positions 18–72 (RGKIEIKRIENTTNRQVTFCKRRNGLLKKAYELSVLCDAEVALVIFSTRGRLYEY) constitute an MADS-box domain. The region spanning 102 to 192 (TQYYQQEASK…RSKITERTGL (91 aa)) is the K-box domain.

Interacts with AGL15 and AGL16.

The protein localises to the nucleus. In terms of biological role, probable transcription factor. Interacts genetically with TT16/AGL32 in a partially antagonistic manner during flower development. Is essential for the coordination of cell divisions in ovule, seed coat development and endosperm formation. The sequence is that of Agamous-like MADS-box protein AGL5 (AGL5) from Arabidopsis thaliana (Mouse-ear cress).